The chain runs to 92 residues: uncharacterized protein (92 aa).

Residues 1 to 23 form the signal peptide; that stretch reads MNPAIVVIIVLLVAALLIWACKA.

This is an uncharacterized protein from Acheta domesticus (House cricket).